Consider the following 132-residue polypeptide: Fatty acid-binding protein 1 (132 aa).

Residues arginine 106 and 128–130 (RYY) each bind a fatty acid.

It belongs to the calycin superfamily. Fatty-acid binding protein (FABP) family. Monomer. As to expression, midgut.

It localises to the cytoplasm. In terms of biological role, binds fatty acids in a 1:1 molar ratio. The sequence is that of Fatty acid-binding protein 1 (MFB1) from Manduca sexta (Tobacco hawkmoth).